A 306-amino-acid chain; its full sequence is Cathepsin Z (306 aa).

The N-terminal stretch at 1–20 is a signal peptide; that stretch reads MLAILFNFFLLTYFTNITLG. A propeptide spans 21–65 (activation peptide); the sequence is KVGKSIDLDTRNGYNVHGCYKQTGKIYAHKTYPRQYEAENYNFDD. Cystine bridges form between Cys39-Cys96, Cys93-Cys136, Cys130-Cys168, Cys158-Cys174, and Cys177-Cys182. The active site involves Cys96. N-linked (GlcNAc...) asparagine glycosylation is present at Asn187. A disulfide bond links Cys217 and Cys299. Residues His243 and Asn265 contribute to the active site. Asn286 carries an N-linked (GlcNAc...) asparagine glycan.

This sequence belongs to the peptidase C1 family.

The protein resides in the cytoplasmic vesicle. It localises to the secretory vesicle. Its subcellular location is the secreted. It catalyses the reaction Release of C-terminal amino acid residues with broad specificity, but lacks action on C-terminal proline. Shows weak endopeptidase activity.. The disulfide bridge formed between Cys-39 in the propeptide and the active site residue Cys-96 may prevent activation of the zymogen through formation of a reversible covalent bond with the active site residue. Functionally, exhibits carboxy-monopeptidase as well as carboxy-dipeptidase activity. Plays an essential role in molting, a process during larval stages in which a new cuticle is formed and the old cuticle is shed. Required for the degradation and shedding of the old cuticle. This chain is Cathepsin Z, found in Onchocerca volvulus.